A 127-amino-acid chain; its full sequence is Small ribosomal subunit protein uS13 (127 aa).

The protein belongs to the universal ribosomal protein uS13 family. In terms of assembly, part of the 30S ribosomal subunit. Forms a loose heterodimer with protein S19. Forms two bridges to the 50S subunit in the 70S ribosome.

Functionally, located at the top of the head of the 30S subunit, it contacts several helices of the 16S rRNA. In the 70S ribosome it contacts the 23S rRNA (bridge B1a) and protein L5 of the 50S subunit (bridge B1b), connecting the 2 subunits; these bridges are implicated in subunit movement. Contacts the tRNAs in the A and P-sites. This is Small ribosomal subunit protein uS13 from Roseiflexus sp. (strain RS-1).